The primary structure comprises 441 residues: Proline--tRNA ligase (441 aa).

The protein belongs to the class-II aminoacyl-tRNA synthetase family. ProS type 2 subfamily. As to quaternary structure, homodimer.

The protein resides in the cytoplasm. The enzyme catalyses tRNA(Pro) + L-proline + ATP = L-prolyl-tRNA(Pro) + AMP + diphosphate. Catalyzes the attachment of proline to tRNA(Pro) in a two-step reaction: proline is first activated by ATP to form Pro-AMP and then transferred to the acceptor end of tRNA(Pro). The polypeptide is Proline--tRNA ligase (Afipia carboxidovorans (strain ATCC 49405 / DSM 1227 / KCTC 32145 / OM5) (Oligotropha carboxidovorans)).